The primary structure comprises 874 residues: Alanine--tRNA ligase (874 aa).

The Zn(2+) site is built by His-562, His-566, Cys-665, and His-669.

It belongs to the class-II aminoacyl-tRNA synthetase family. The cofactor is Zn(2+).

It is found in the cytoplasm. The catalysed reaction is tRNA(Ala) + L-alanine + ATP = L-alanyl-tRNA(Ala) + AMP + diphosphate. Its function is as follows. Catalyzes the attachment of alanine to tRNA(Ala) in a two-step reaction: alanine is first activated by ATP to form Ala-AMP and then transferred to the acceptor end of tRNA(Ala). Also edits incorrectly charged Ser-tRNA(Ala) and Gly-tRNA(Ala) via its editing domain. The polypeptide is Alanine--tRNA ligase (Pseudomonas putida (strain ATCC 47054 / DSM 6125 / CFBP 8728 / NCIMB 11950 / KT2440)).